Here is a 197-residue protein sequence, read N- to C-terminus: Carbohydrate-binding domain-containing protein C2E1P3.05c (197 aa).

The first 23 residues, 1–23 (MLTQSLFLTVLTLALSLVSKTSA), serve as a signal peptide directing secretion. 2 consecutive CBM1 domains span residues 25-61 (QCSP…SQCI) and 68-104 (PCAK…SQCI). Cystine bridges form between cysteine 33/cysteine 50, cysteine 44/cysteine 60, cysteine 76/cysteine 93, and cysteine 87/cysteine 103. The interval 115–163 (SSAASSTTSTTSSSSLVSSTTLTSSSPSAVSSTTSIPSISSTISSSVST) is disordered. Residues asparagine 182 and asparagine 193 are each glycosylated (N-linked (GlcNAc...) asparagine).

It is found in the secreted. This is Carbohydrate-binding domain-containing protein C2E1P3.05c from Schizosaccharomyces pombe (strain 972 / ATCC 24843) (Fission yeast).